The following is a 160-amino-acid chain: MQLTVKALQGRECSLQVSEDELVSTLKHVVSEKLNVPVRQQRLLFKGKALADGKRLSDYSIGPNSKLNLVVKPLEKVLLEESAAACRLTEAPLPRPPAWQLIAKVLARHFSAADASRVLDQLQRDYERSLSRLTLDDIERLASRFLHPEVTEAVEKGFSK.

The region spanning 1–76 is the Ubiquitin-like domain; sequence MQLTVKALQG…LNLVVKPLEK (76 aa). Residue lysine 48 forms a Glycyl lysine isopeptide (Lys-Gly) (interchain with G-Cter in ubiquitin) linkage. A required and sufficient for interaction with BAG6 region spans residues 99–141; the sequence is WQLIAKVLARHFSAADASRVLDQLQRDYERSLSRLTLDDIERL.

As to quaternary structure, component of the BAG6/BAT3 complex, at least composed of BAG6, UBL4A and GET4/TRC35. Interacts with BAG6; the interaction is direct and required for UBL4A protein stability. Interacts with USP13; may be indirect via BAG6. Post-translationally, polyubiquitinated. Ubiquitination by AMFR and deubiquitination by USP13 may regulate the interaction between the BAG6/BAT complex and SGTA and therefore may regulate client proteins fate.

Its subcellular location is the cytoplasm. It is found in the cytosol. The protein resides in the nucleus. Functionally, as part of a cytosolic protein quality control complex, the BAG6/BAT3 complex, maintains misfolded and hydrophobic patches-containing proteins in a soluble state and participates in their proper delivery to the endoplasmic reticulum or alternatively can promote their sorting to the proteasome where they undergo degradation. The BAG6/BAT3 complex is involved in the post-translational delivery of tail-anchored/type II transmembrane proteins to the endoplasmic reticulum membrane. Recruited to ribosomes, it interacts with the transmembrane region of newly synthesized tail-anchored proteins and together with SGTA and ASNA1 mediates their delivery to the endoplasmic reticulum. Client proteins that cannot be properly delivered to the endoplasmic reticulum are ubiquitinated and sorted to the proteasome. Similarly, the BAG6/BAT3 complex also functions as a sorting platform for proteins of the secretory pathway that are mislocalized to the cytosol either delivering them to the proteasome for degradation or to the endoplasmic reticulum. The BAG6/BAT3 complex also plays a role in the endoplasmic reticulum-associated degradation (ERAD), a quality control mechanism that eliminates unwanted proteins of the endoplasmic reticulum through their retrotranslocation to the cytosol and their targeting to the proteasome. It maintains these retrotranslocated proteins in an unfolded yet soluble state condition in the cytosol to ensure their proper delivery to the proteasome. The chain is Ubiquitin-like protein 4A (UBL4A) from Rhinolophus ferrumequinum (Greater horseshoe bat).